A 365-amino-acid polypeptide reads, in one-letter code: tRNA-specific 2-thiouridylase MnmA (365 aa).

Residues 14–21 and L40 contribute to the ATP site; that span reads AMSGGVDS. The active-site Nucleophile is C108. Cysteines 108 and 204 form a disulfide. An ATP-binding site is contributed by G132. An interaction with tRNA region spans residues 154–156; it reads KDQ. The active-site Cysteine persulfide intermediate is C204.

Belongs to the MnmA/TRMU family.

Its subcellular location is the cytoplasm. It carries out the reaction S-sulfanyl-L-cysteinyl-[protein] + uridine(34) in tRNA + AH2 + ATP = 2-thiouridine(34) in tRNA + L-cysteinyl-[protein] + A + AMP + diphosphate + H(+). Catalyzes the 2-thiolation of uridine at the wobble position (U34) of tRNA, leading to the formation of s(2)U34. In Rickettsia akari (strain Hartford), this protein is tRNA-specific 2-thiouridylase MnmA.